The sequence spans 386 residues: PqqA peptide cyclase (386 aa).

The region spanning 9–228 (SKPPLWLLAE…RQYIDQHHLK (220 aa)) is the Radical SAM core domain. Residues C23, C27, and C30 each coordinate [4Fe-4S] cluster.

It belongs to the radical SAM superfamily. PqqE family. As to quaternary structure, interacts with PqqD. The interaction is necessary for activity of PqqE. [4Fe-4S] cluster serves as cofactor.

The catalysed reaction is [PQQ precursor protein] + S-adenosyl-L-methionine = E-Y cross-linked-[PQQ precursor protein] + 5'-deoxyadenosine + L-methionine + H(+). It participates in cofactor biosynthesis; pyrroloquinoline quinone biosynthesis. Functionally, catalyzes the cross-linking of a glutamate residue and a tyrosine residue in the PqqA protein as part of the biosynthesis of pyrroloquinoline quinone (PQQ). This chain is PqqA peptide cyclase, found in Acinetobacter baylyi (strain ATCC 33305 / BD413 / ADP1).